The chain runs to 842 residues: MSEEDRNVFTSIDKKGGGSKQMDDLNQKCPKRKTSKLKGIPKLEDANDAGTKNSQQCTLILTEGDSAKTLAVSGLSVVGRDKYGVFPFRRKLLNVCDLNVNQIADSAEVNAIIKILGLQYTKKYETEDDFKTLRYGKLLIMANHDSDGSQFKGLLLNFFHRFWPALFKRDFVEDFITPIAKATEGKEEVSFYSLPEYSEWRMNTDNWKSYTIKYYNGLGTLTSKEAKKCFSDMVRHRIRFKYNGADDDKAVNMAFSKKKIEARTDYLMKLMQDKNQRKQQGLAEECLYNKETRFVTLKDFFNYEIVCSWNLHSIPCLVDGLKPGQRKVLFACFKRANKREVKVAQLAGAVAEISAYHHGEQSLMGTIVNLAQDYVGSHNINLLLPIGQFGTRLQGGKDSASARSIFAQLSQVTRTLFPAHDDNVLRFLYEENQRIEPEWYCPIIPMVLVNGAQGTGTGWSTNIPNYNPRELVKNIKRLIAGEPQKALAPWYKNFRGKIIQIDPSRFACYGEVSVLDDNTIEITELPIKQWTQDYKEKVLEGLMESSDKKSPVIVDYKEYHTDTTVKFVVKLSPGKLRELERGQDLHQVFKLQAVINTTCMVLFDAAGWLRTYTSPEAITQEFYDSRQEKYVQRKEYLLGVLQAQSKRLTNQARFILATINNKIVLENKKKTAIVDVLIKMKFDADPVKKWKEDQKLKELRESGEIELDEDDLAAVAVEEGEDISSAAKAVETKLSDYDYLVGLALIKLSEEEKNKLIKESEEKMAEVRVLEKKTWQDLWITDLDNFMSELTSRRLARKLSLRRTATRWYAMICQRRVTWSSMKESISIRTMTVWSVRMSSRS.

The span at 1 to 26 shows a compositional bias: basic and acidic residues; it reads MSEEDRNVFTSIDKKGGGSKQMDDLN. A disordered region spans residues 1-50; it reads MSEEDRNVFTSIDKKGGGSKQMDDLNQKCPKRKTSKLKGIPKLEDANDAG. In terms of domain architecture, Topo IIA-type catalytic spans 314 to 783; that stretch reads IPCLVDGLKP…TWQDLWITDL (470 aa).

It belongs to the type II topoisomerase family.

Functionally, plays a role in the removal of cohesin from kinetochores on mitotic chromosomes and is required for centromere resolution. The sequence is that of DNA topoisomerase-like protein cin-4 from Caenorhabditis elegans.